The primary structure comprises 223 residues: Pre-protein VI (223 aa).

The propeptide occupies 1–27; that stretch reads MAYSRLAPHCGLPVYGHHIGNSEMSGG. The interval 28 to 51 is amphipathic alpha-helix essential for membrane lytic activity; it reads FSWSSLGSSLSSGLSRIGSFLGST. The interval 29 to 50 is involved in endosomal membrane lysis; the sequence is SWSSLGSSLSSGLSRIGSFLGS. Interaction with hexon protein stretches follow at residues 45–71 and 206–212; these read GSFLGSTAQRIGNSQGFQQAKEGFLKS and LEDMLGD. 2 short sequence motifs (nuclear export signal) span residues 64–73 and 204–215; these read AKEGFLKSGV and SALEDMLGDGVC. The segment at 213–223 is binds to importin alpha/beta, involved in hexon nuclear import; that stretch reads GVCYRSKRYCY.

This sequence belongs to the adenoviridae protein VI family. Interacts with hexon protein; this interaction allows nuclear import of hexon trimers and possibly pre-capsid assembly. Interacts (via C-terminal NLS) with importin alpha/beta. In terms of assembly, interacts (via PPxY motif) with host NEDD4 ubiquitine ligase; this interaction might play a role in virus intracellular transport during entry. Part of a complex composed of the core-capsid bridging protein, the endosome lysis protein VI and the hexon-linking protein VIII; these interactions bridge the virus core to the capsid. Interacts with peripentonal hexons; this interaction stabilizes the capsid by gluing two peripentonal hexons together and joining them with an adjacent group-of-nine hexon. As to quaternary structure, heterodimer with the viral protease; disulfide-linked. Interacts with the viral protease. In terms of processing, ubiquitinated by Nedd4 following partial capsid disassembly; which might play a role in intracellular virus movement during entry. Post-translationally, contains the major nuclear import and export signals. Proteolytically removed during virion maturation. The processing of the C-terminus turns the precursor into a mature viral structural protein and abrogates its ability to promote hexon import and act as a potential chaperone protein.

The protein localises to the host nucleus. It localises to the host cytoplasm. Its subcellular location is the virion. Its function is as follows. During virus assembly, promotes hexon trimers nuclear import through nuclear pore complexes via an importin alpha/beta-dependent mechanism. By analogy to herpesviruses capsid assembly, might act as a chaperone to promote the formation of the icosahedral capsid. Structural component of the virion that provides increased stability to the particle shell through its interaction with the core-capsid bridging protein and the hexon-linking protein VIII. Fibers shedding during virus entry into host cell allows the endosome lysis protein to be exposed as a membrane-lytic peptide. Exhibits pH-independent membrane fragmentation activity and probably mediates viral rapid escape from host endosome via organellar membrane lysis. It is not clear if it then remains partially associated with the capsid and involved in the intracellular microtubule-dependent transport of capsid to the nucleus, or if it is lost during endosomal penetration. In terms of biological role, cofactor that activates the viral protease. Binds to viral protease in a 1:1 ratio. The polypeptide is Pre-protein VI (Pantherophis guttatus (Corn snake)).